Consider the following 263-residue polypeptide: Nucleoside triphosphate pyrophosphohydrolase (263 aa).

Residues 168–172 (KVYEE), Glu-175, and 189–192 (KLEE) each bind ATP. The Mg(2+) site is built by Glu-172 and Glu-175. Mg(2+)-binding residues include Glu-193 and Asp-196. Residues Asp-196, 222–226 (KFERR), and Trp-253 each bind ATP.

The protein belongs to the nucleoside triphosphate pyrophosphohydrolase family. In terms of assembly, homodimer. The cofactor is Mg(2+).

The enzyme catalyses ATP + H2O = AMP + diphosphate + H(+). In terms of biological role, involved in the regulation of bacterial cell survival under conditions of nutritional stress. Regulates the MazE-MazF toxin-antitoxin (TA) system that mediates programmed cell death (PCD). This is achieved by lowering the cellular concentration of (p)ppGpp produced by RelA under amino acid starvation, thus protecting the cell from the toxicity of MazF. Reduction of (p)ppGpp can be achieved by direct degradation of (p)ppGpp or by degradation of NTPs, which are substrates for (p)ppGpp synthesis by RelA. In Escherichia coli O157:H7, this protein is Nucleoside triphosphate pyrophosphohydrolase (mazG).